Here is a 66-residue protein sequence, read N- to C-terminus: Probable Sec-independent protein translocase protein TatE (66 aa).

The chain crosses the membrane as a helical span at residues 1 to 21; sequence MEGISITKLLVIAVLIVLLFG. The segment at 46–66 is disordered; it reads ETPAAKKSDGAEAAPRVENKE.

This sequence belongs to the TatA/E family. TatE subfamily.

The protein resides in the cell inner membrane. In terms of biological role, part of the twin-arginine translocation (Tat) system that transports large folded proteins containing a characteristic twin-arginine motif in their signal peptide across membranes. TatE shares overlapping functions with TatA. The polypeptide is Probable Sec-independent protein translocase protein TatE (Edwardsiella piscicida).